A 238-amino-acid polypeptide reads, in one-letter code: Probable transglycosylase SceD 3 (238 aa).

An N-terminal signal peptide occupies residues 1–27 (MKKTVVASTLAVGLGVTGFAAGNSADA). The tract at residues 82 to 161 (YGQGSTNAPA…SEASEGSSVN (80 aa)) is disordered. Positions 89–156 (APAQETAEQP…NESSSSEASE (68 aa)) are enriched in low complexity.

Belongs to the transglycosylase family. SceD subfamily.

The protein resides in the secreted. In terms of biological role, is able to cleave peptidoglycan and affects clumping and separation of bacterial cells. The sequence is that of Probable transglycosylase SceD 3 (sceD3) from Staphylococcus saprophyticus subsp. saprophyticus (strain ATCC 15305 / DSM 20229 / NCIMB 8711 / NCTC 7292 / S-41).